A 100-amino-acid polypeptide reads, in one-letter code: Aspartyl/glutamyl-tRNA(Asn/Gln) amidotransferase subunit C (100 aa).

The protein belongs to the GatC family. In terms of assembly, heterotrimer of A, B and C subunits.

The enzyme catalyses L-glutamyl-tRNA(Gln) + L-glutamine + ATP + H2O = L-glutaminyl-tRNA(Gln) + L-glutamate + ADP + phosphate + H(+). It carries out the reaction L-aspartyl-tRNA(Asn) + L-glutamine + ATP + H2O = L-asparaginyl-tRNA(Asn) + L-glutamate + ADP + phosphate + 2 H(+). Functionally, allows the formation of correctly charged Asn-tRNA(Asn) or Gln-tRNA(Gln) through the transamidation of misacylated Asp-tRNA(Asn) or Glu-tRNA(Gln) in organisms which lack either or both of asparaginyl-tRNA or glutaminyl-tRNA synthetases. The reaction takes place in the presence of glutamine and ATP through an activated phospho-Asp-tRNA(Asn) or phospho-Glu-tRNA(Gln). This chain is Aspartyl/glutamyl-tRNA(Asn/Gln) amidotransferase subunit C, found in Streptococcus agalactiae serotype III (strain NEM316).